Consider the following 463-residue polypeptide: NADH-quinone oxidoreductase subunit N (463 aa).

14 consecutive transmembrane segments (helical) span residues 5 to 25, 34 to 54, 72 to 92, 99 to 119, 120 to 140, 154 to 174, 196 to 216, 230 to 250, 259 to 279, 286 to 303, 314 to 334, 356 to 376, 393 to 413, and 432 to 452; these read LLYG…LMLL, AGSA…VMQL, FSEI…VYSL, KYWI…DSAG, FISL…LMVL, YLLL…LVYG, LAAS…FPFH, VTAF…VRIL, AVTV…ITAI, KMLA…MFAL, LLYY…CFSI, AILL…PGFL, VAVL…GVVL, and LCWT…FMLL.

Belongs to the complex I subunit 2 family. NDH-1 is composed of 14 different subunits. Subunits NuoA, H, J, K, L, M, N constitute the membrane sector of the complex.

It is found in the cell inner membrane. It carries out the reaction a quinone + NADH + 5 H(+)(in) = a quinol + NAD(+) + 4 H(+)(out). In terms of biological role, NDH-1 shuttles electrons from NADH, via FMN and iron-sulfur (Fe-S) centers, to quinones in the respiratory chain. The immediate electron acceptor for the enzyme in this species is believed to be ubiquinone. Couples the redox reaction to proton translocation (for every two electrons transferred, four hydrogen ions are translocated across the cytoplasmic membrane), and thus conserves the redox energy in a proton gradient. The protein is NADH-quinone oxidoreductase subunit N of Pelobacter propionicus (strain DSM 2379 / NBRC 103807 / OttBd1).